Here is a 261-residue protein sequence, read N- to C-terminus: Bidirectional sugar transporter SWEET1b (261 aa).

Residues 1–6 (MEDLAK) are Extracellular-facing. A helical transmembrane segment spans residues 7–27 (FLFGVSGNVIALFLFLSPVPT). The MtN3/slv 1 domain maps to 7–95 (FLFGVSGNVI…VVFLVFASTH (89 aa)). The Cytoplasmic portion of the chain corresponds to 28-42 (FWRIIRRKSTEDFSG). Residues 43–63 (VPYNMTLINCLLSAWYGLPFV) form a helical membrane-spanning segment. Topologically, residues 64–71 (SPNNILVS) are extracellular. A helical transmembrane segment spans residues 72–92 (TINGAGAVIETAYVVVFLVFA). Residues 93–101 (STHKTRLRT) lie on the Cytoplasmic side of the membrane. Residues 102 to 122 (LGLAAAVASVFAAVALVSLLA) form a helical membrane-spanning segment. Residues 123 to 129 (LHGQHRK) are Extracellular-facing. The helical transmembrane segment at 130–150 (LLCGVAATVCSICMYASPLSI) threads the bilayer. Residues 133-215 (GVAATVCSIC…VLYAIYRNNK (83 aa)) enclose the MtN3/slv 2 domain. Over 151–164 (MRLVIKTKSVEYMP) the chain is Cytoplasmic. The helical transmembrane segment at 165-185 (FLMSLAVFLCGTSWFIYGLLG) threads the bilayer. Residues 186–189 (RDPF) are Extracellular-facing. A helical transmembrane segment spans residues 190–210 (VTIPNGCGSFLGAVQLVLYAI). The Cytoplasmic portion of the chain corresponds to 211-261 (YRNNKGAGGGSGGKQAGDDDVEMAEGRNNKVADGGAADDDSTAGGKAGTEV). The interval 218 to 261 (GGGSGGKQAGDDDVEMAEGRNNKVADGGAADDDSTAGGKAGTEV) is disordered.

It belongs to the SWEET sugar transporter family. Forms homodimers. Highly expressed in leaves. Expressed at very low levels in roots, stems and panicles.

The protein resides in the cell membrane. It catalyses the reaction D-glucose(out) = D-glucose(in). It carries out the reaction D-galactose(in) = D-galactose(out). In terms of biological role, mediates transport of sugars across the plasma membrane. Can transport glucose and galactose, but not fructose, mannose and sucrose. This Oryza sativa subsp. japonica (Rice) protein is Bidirectional sugar transporter SWEET1b (SWEET1B).